The primary structure comprises 743 residues: 1,4-alpha-glucan branching enzyme GlgB (743 aa).

Aspartate 416 functions as the Nucleophile in the catalytic mechanism. Residue glutamate 469 is the Proton donor of the active site.

It belongs to the glycosyl hydrolase 13 family. GlgB subfamily. Monomer.

It catalyses the reaction Transfers a segment of a (1-&gt;4)-alpha-D-glucan chain to a primary hydroxy group in a similar glucan chain.. It functions in the pathway glycan biosynthesis; glycogen biosynthesis. Functionally, catalyzes the formation of the alpha-1,6-glucosidic linkages in glycogen by scission of a 1,4-alpha-linked oligosaccharide from growing alpha-1,4-glucan chains and the subsequent attachment of the oligosaccharide to the alpha-1,6 position. The sequence is that of 1,4-alpha-glucan branching enzyme GlgB from Shewanella baltica (strain OS223).